Here is a 949-residue protein sequence, read N- to C-terminus: RNA polymerase-associated protein RapA (949 aa).

The 169-residue stretch at 164–332 (EVADRIAPRV…FARLRLLDPN (169 aa)) folds into the Helicase ATP-binding domain. 177–184 (DEVGLGKT) is a binding site for ATP. The short motif at 278 to 281 (DEAH) is the DEAH box element. The Helicase C-terminal domain maps to 474 to 628 (RVEWLIDQLK…TCPTGNALQH (155 aa)).

This sequence belongs to the SNF2/RAD54 helicase family. RapA subfamily. Interacts with the RNAP. Has a higher affinity for the core RNAP than for the holoenzyme. Its ATPase activity is stimulated by binding to RNAP.

Its function is as follows. Transcription regulator that activates transcription by stimulating RNA polymerase (RNAP) recycling in case of stress conditions such as supercoiled DNA or high salt concentrations. Probably acts by releasing the RNAP, when it is trapped or immobilized on tightly supercoiled DNA. Does not activate transcription on linear DNA. Probably not involved in DNA repair. This chain is RNA polymerase-associated protein RapA, found in Pseudomonas fluorescens (strain ATCC BAA-477 / NRRL B-23932 / Pf-5).